We begin with the raw amino-acid sequence, 484 residues long: UDP-N-acetylmuramate--L-alanine ligase (484 aa).

127-133 (GTHGKTT) is a binding site for ATP.

The protein belongs to the MurCDEF family.

It localises to the cytoplasm. It catalyses the reaction UDP-N-acetyl-alpha-D-muramate + L-alanine + ATP = UDP-N-acetyl-alpha-D-muramoyl-L-alanine + ADP + phosphate + H(+). Its pathway is cell wall biogenesis; peptidoglycan biosynthesis. Functionally, cell wall formation. This chain is UDP-N-acetylmuramate--L-alanine ligase, found in Shewanella amazonensis (strain ATCC BAA-1098 / SB2B).